Reading from the N-terminus, the 338-residue chain is Solute carrier family 35 member G6 (338 aa).

Residues 1 to 25 (MAGSHPYLNPPDSTHPSPPSAPPSL) form a disordered region. Transmembrane regions (helical) follow at residues 40-60 (LLVA…LSHM), 67-87 (LPSL…ALLL), 105-125 (YFYA…VQVV), 160-180 (CGLL…LWTL), 190-210 (ALGY…LLVY), 221-241 (TVAF…LFVL), 255-275 (CVGA…YAVT), 281-301 (LVCA…YYML), and 310-330 (IVGA…NLSC). Residues 49-174 (LPAGFVGPLS…SILGLIIIVG (126 aa)) enclose the EamA 1 domain. Residues 272–325 (YAVTKAHPALVCAVLHSEVVVALILQYYMLHETVAPSDIVGAGVVLGSIAIITA) form the EamA 2 domain.

It belongs to the SLC35G solute transporter family. Expressed in placenta and testis.

Its subcellular location is the membrane. The protein is Solute carrier family 35 member G6 (SLC35G6) of Homo sapiens (Human).